The following is a 347-amino-acid chain: Holliday junction branch migration complex subunit RuvB (347 aa).

Positions Gln4 to Tyr184 are large ATPase domain (RuvB-L). Residues Arg24, Gly65, Lys68, Thr69, Thr70, Glu131–Phe133, Arg174, Tyr184, and Arg221 each bind ATP. Thr69 provides a ligand contact to Mg(2+). Residues Ser185 to Asn255 form a small ATPAse domain (RuvB-S) region. The head domain (RuvB-H) stretch occupies residues His258–Ile347. The DNA site is built by Arg294, Arg313, and Arg318.

Belongs to the RuvB family. As to quaternary structure, homohexamer. Forms an RuvA(8)-RuvB(12)-Holliday junction (HJ) complex. HJ DNA is sandwiched between 2 RuvA tetramers; dsDNA enters through RuvA and exits via RuvB. An RuvB hexamer assembles on each DNA strand where it exits the tetramer. Each RuvB hexamer is contacted by two RuvA subunits (via domain III) on 2 adjacent RuvB subunits; this complex drives branch migration. In the full resolvosome a probable DNA-RuvA(4)-RuvB(12)-RuvC(2) complex forms which resolves the HJ.

It is found in the cytoplasm. It catalyses the reaction ATP + H2O = ADP + phosphate + H(+). The RuvA-RuvB-RuvC complex processes Holliday junction (HJ) DNA during genetic recombination and DNA repair, while the RuvA-RuvB complex plays an important role in the rescue of blocked DNA replication forks via replication fork reversal (RFR). RuvA specifically binds to HJ cruciform DNA, conferring on it an open structure. The RuvB hexamer acts as an ATP-dependent pump, pulling dsDNA into and through the RuvAB complex. RuvB forms 2 homohexamers on either side of HJ DNA bound by 1 or 2 RuvA tetramers; 4 subunits per hexamer contact DNA at a time. Coordinated motions by a converter formed by DNA-disengaged RuvB subunits stimulates ATP hydrolysis and nucleotide exchange. Immobilization of the converter enables RuvB to convert the ATP-contained energy into a lever motion, pulling 2 nucleotides of DNA out of the RuvA tetramer per ATP hydrolyzed, thus driving DNA branch migration. The RuvB motors rotate together with the DNA substrate, which together with the progressing nucleotide cycle form the mechanistic basis for DNA recombination by continuous HJ branch migration. Branch migration allows RuvC to scan DNA until it finds its consensus sequence, where it cleaves and resolves cruciform DNA. This chain is Holliday junction branch migration complex subunit RuvB, found in Teredinibacter turnerae (strain ATCC 39867 / T7901).